The chain runs to 422 residues: UDP-N-acetylglucosamine 1-carboxyvinyltransferase (422 aa).

22–23 (KN) contacts phosphoenolpyruvate. Arginine 93 provides a ligand contact to UDP-N-acetyl-alpha-D-glucosamine. Cysteine 117 acts as the Proton donor in catalysis. Residue cysteine 117 is modified to 2-(S-cysteinyl)pyruvic acid O-phosphothioketal. UDP-N-acetyl-alpha-D-glucosamine-binding positions include 122-126 (RPVDL), aspartate 308, and leucine 330.

This sequence belongs to the EPSP synthase family. MurA subfamily.

The protein resides in the cytoplasm. It carries out the reaction phosphoenolpyruvate + UDP-N-acetyl-alpha-D-glucosamine = UDP-N-acetyl-3-O-(1-carboxyvinyl)-alpha-D-glucosamine + phosphate. The protein operates within cell wall biogenesis; peptidoglycan biosynthesis. Cell wall formation. Adds enolpyruvyl to UDP-N-acetylglucosamine. The polypeptide is UDP-N-acetylglucosamine 1-carboxyvinyltransferase (Helicobacter pylori (strain Shi470)).